The sequence spans 336 residues: Glutamyl endopeptidase (336 aa).

Positions 1 to 29 (MKGKFLKVSSLFVATLTTATLVSSPAANA) are cleaved as a signal peptide. Residues 30–68 (LSSKAMDNHPQQTQSSKQQTPKIQKGGNLKPLEQREHAN) constitute a propeptide that is removed on maturation. Residues 34 to 61 (AMDNHPQQTQSSKQQTPKIQKGGNLKPL) are disordered. The segment covering 39–51 (PQQTQSSKQQTPK) has biased composition (low complexity). Active-site charge relay system residues include histidine 119, aspartate 161, and serine 237. The segment at 283–336 (FANDDQPNNPDNPDNPNNPDNPNNPDEPNNPDNPNNPDNPDNGDTNNSDNPDAA) is disordered. Positions 286-336 (DDQPNNPDNPDNPNNPDNPNNPDEPNNPDNPNNPDNPDNGDTNNSDNPDAA) are enriched in low complexity. 11 repeat units span residues 289–291 (PNN), 292–294 (PDN), 295–297 (PDN), 298–300 (PNN), 301–303 (PDN), 304–306 (PNN), 310–312 (PNN), 313–315 (PDN), 316–318 (PNN), 319–321 (PDN), and 322–324 (PDN). Residues 289-324 (PNNPDNPDNPNNPDNPNNPDEPNNPDNPNNPDNPDN) form an 11 X 3 AA repeats of P-[DN]-N region.

The protein belongs to the peptidase S1B family. Proteolytically cleaved by aureolysin (aur). This cleavage leads to the activation of SspA.

Its subcellular location is the secreted. The enzyme catalyses Preferential cleavage: Glu-|-Xaa, Asp-|-Xaa.. Functionally, preferentially cleaves peptide bonds on the carboxyl-terminal side of aspartate and glutamate. Along with other extracellular proteases it is involved in colonization and infection of human tissues. Required for proteolytic maturation of thiol protease SspB and inactivation of SspC, an inhibitor of SspB. It is the most important protease for degradation of fibronectin-binding protein (FnBP) and surface protein A, which are involved in adherence to host cells. May also protect bacteria against host defense mechanism by cleaving the immunoglobulin classes IgG, IgA and IgM. May be involved in the stability of secreted lipases. This is Glutamyl endopeptidase (sspA) from Staphylococcus aureus (strain COL).